The following is a 239-amino-acid chain: MELTWYGHSTWHVTVDDTELLIDPFFDNPHTDTDPEELGPDYVLLTHGHADHIGDVDRYEGCGLVATPEVVEYCKDNFGEFNAVGGMGMNLGGTVEIGDAFVTMHRADHTNGMETSYGASGGMPGGFIISDTKPTQVSDAESTTFYHAGDTGLMTEMRDVIGPFLEPDAAAVPVGDHFTMGPMQAAVAVDWLDVDHAFPMHYDTFPPIEIETQDFVNEVKGTGSDADVHVLDGDETFEL.

Belongs to the UPF0173 family.

This chain is UPF0173 metal-dependent hydrolase rrnAC0300, found in Haloarcula marismortui (strain ATCC 43049 / DSM 3752 / JCM 8966 / VKM B-1809) (Halobacterium marismortui).